A 93-amino-acid chain; its full sequence is Small ribosomal subunit protein uS17 (93 aa).

This sequence belongs to the universal ribosomal protein uS17 family. Part of the 30S ribosomal subunit.

Its function is as follows. One of the primary rRNA binding proteins, it binds specifically to the 5'-end of 16S ribosomal RNA. This Bordetella bronchiseptica (strain ATCC BAA-588 / NCTC 13252 / RB50) (Alcaligenes bronchisepticus) protein is Small ribosomal subunit protein uS17.